A 264-amino-acid polypeptide reads, in one-letter code: uncharacterized protein (264 aa).

Residues 7 to 27 (LTLGICLVLLIILIVGYVIMT) traverse the membrane as a helical segment.

This sequence belongs to the staphylococcal tandem lipoprotein family.

It is found in the cell membrane. This is an uncharacterized protein from Staphylococcus aureus (strain MW2).